The chain runs to 444 residues: UDP-N-acetylmuramate--L-alanine ligase (444 aa).

110–116 lines the ATP pocket; it reads GAHGKTS.

Belongs to the MurCDEF family.

It localises to the cytoplasm. It carries out the reaction UDP-N-acetyl-alpha-D-muramate + L-alanine + ATP = UDP-N-acetyl-alpha-D-muramoyl-L-alanine + ADP + phosphate + H(+). Its pathway is cell wall biogenesis; peptidoglycan biosynthesis. Its function is as follows. Cell wall formation. In Streptococcus pneumoniae (strain ATCC 700669 / Spain 23F-1), this protein is UDP-N-acetylmuramate--L-alanine ligase.